Consider the following 205-residue polypeptide: Inactive ribonuclease-like protein 9 (205 aa).

The signal sequence occupies residues methionine 1 to phenylalanine 26. 3 disulfides stabilise this stretch: cysteine 98–cysteine 153, cysteine 116–cysteine 168, and cysteine 123–cysteine 130. 2 N-linked (GlcNAc...) asparagine glycosylation sites follow: asparagine 131 and asparagine 143.

This sequence belongs to the pancreatic ribonuclease family.

It localises to the secreted. Its function is as follows. Does not exhibit any ribonuclease activity. In Gorilla gorilla gorilla (Western lowland gorilla), this protein is Inactive ribonuclease-like protein 9 (RNASE9).